Here is a 186-residue protein sequence, read N- to C-terminus: Transcriptional repressor NrdR (186 aa).

A disordered region spans residues 1–24 (MRCPYCGGLDTQVKDSRPSDDASA). The segment at 3–34 (CPYCGGLDTQVKDSRPSDDASAIRRRRICPDC) is a zinc-finger region. Residues 12–24 (QVKDSRPSDDASA) show a composition bias toward basic and acidic residues. Residues 49-139 (LTVVKRSGRR…VYKNFREARD (91 aa)) enclose the ATP-cone domain. Residues 146-186 (RLNGAGRPGGEPEPPDEAAPGPAAAPGEGGEAPARRARSRA) form a disordered region.

This sequence belongs to the NrdR family. Zn(2+) serves as cofactor.

Functionally, negatively regulates transcription of bacterial ribonucleotide reductase nrd genes and operons by binding to NrdR-boxes. The protein is Transcriptional repressor NrdR of Methylobacterium sp. (strain 4-46).